The following is a 596-amino-acid chain: Aspartate--tRNA(Asp/Asn) ligase (596 aa).

Glu182 serves as a coordination point for L-aspartate. Residues Gln206–Lys209 are aspartate. Arg228 provides a ligand contact to L-aspartate. ATP-binding positions include Arg228–Glu230 and Gln237. Residue His456 participates in L-aspartate binding. Residue Glu490 participates in ATP binding. An L-aspartate-binding site is contributed by Arg497. Gly542–Arg545 contacts ATP.

The protein belongs to the class-II aminoacyl-tRNA synthetase family. Type 1 subfamily. In terms of assembly, homodimer.

It is found in the cytoplasm. It carries out the reaction tRNA(Asx) + L-aspartate + ATP = L-aspartyl-tRNA(Asx) + AMP + diphosphate. Functionally, aspartyl-tRNA synthetase with relaxed tRNA specificity since it is able to aspartylate not only its cognate tRNA(Asp) but also tRNA(Asn). Reaction proceeds in two steps: L-aspartate is first activated by ATP to form Asp-AMP and then transferred to the acceptor end of tRNA(Asp/Asn). The sequence is that of Aspartate--tRNA(Asp/Asn) ligase from Syntrophotalea carbinolica (strain DSM 2380 / NBRC 103641 / GraBd1) (Pelobacter carbinolicus).